A 306-amino-acid chain; its full sequence is Tryptophan 2,3-dioxygenase (306 aa).

The interval 1-33 (MQPPGDDAAPRCPFAGAHAPDAPHVPEAAGDDA) is disordered. Substrate contacts are provided by residues 75–79 (FIIQH), Tyr137, and Arg141. His264 is a heme binding site. Residue Thr278 participates in substrate binding.

This sequence belongs to the tryptophan 2,3-dioxygenase family. Homotetramer. The cofactor is heme.

The enzyme catalyses L-tryptophan + O2 = N-formyl-L-kynurenine. It functions in the pathway amino-acid degradation; L-tryptophan degradation via kynurenine pathway; L-kynurenine from L-tryptophan: step 1/2. In terms of biological role, heme-dependent dioxygenase that catalyzes the oxidative cleavage of the L-tryptophan (L-Trp) pyrrole ring and converts L-tryptophan to N-formyl-L-kynurenine. Catalyzes the oxidative cleavage of the indole moiety. This chain is Tryptophan 2,3-dioxygenase, found in Burkholderia pseudomallei (strain 1106a).